Here is a 288-residue protein sequence, read N- to C-terminus: Shikimate dehydrogenase (NADP(+)) (288 aa).

Residues 22–24 (SLS) and T69 contribute to the shikimate site. K73 functions as the Proton acceptor in the catalytic mechanism. Shikimate-binding residues include N94 and D110. Residues 131-135 (GSGGA) and L228 each bind NADP(+). Position 230 (Y230) interacts with shikimate. G251 serves as a coordination point for NADP(+).

It belongs to the shikimate dehydrogenase family. In terms of assembly, homodimer.

It carries out the reaction shikimate + NADP(+) = 3-dehydroshikimate + NADPH + H(+). Its pathway is metabolic intermediate biosynthesis; chorismate biosynthesis; chorismate from D-erythrose 4-phosphate and phosphoenolpyruvate: step 4/7. Involved in the biosynthesis of the chorismate, which leads to the biosynthesis of aromatic amino acids. Catalyzes the reversible NADPH linked reduction of 3-dehydroshikimate (DHSA) to yield shikimate (SA). This chain is Shikimate dehydrogenase (NADP(+)), found in Synechococcus sp. (strain JA-2-3B'a(2-13)) (Cyanobacteria bacterium Yellowstone B-Prime).